We begin with the raw amino-acid sequence, 232 residues long: uncharacterized protein (232 aa).

The interval 119–145 (DEEYRENSKAPEAKARPSFVGEGRRLG) is disordered. Residues 123 to 133 (RENSKAPEAKA) are compositionally biased toward basic and acidic residues.

This is an uncharacterized protein from Encephalitozoon cuniculi (strain GB-M1) (Microsporidian parasite).